A 174-amino-acid chain; its full sequence is Rubredoxin-2 (174 aa).

Residues 1 to 53 (MAKYQCPDCEYIYDEVAGHPHEGFPPGTSWETIPEEWACPDCAVRDKADFVVI) enclose the Rubredoxin-like 1 domain. 4 residues coordinate Fe cation: cysteine 6, cysteine 9, cysteine 39, and cysteine 42. Residues 56 to 65 (GSASPASGAA) show a composition bias toward low complexity. A disordered region spans residues 56-115 (GSASPASGAATPEVRTATTPPKAEASPQKSTGASTPSANNKAKAKAKAKPARAKSSKDST). Basic residues predominate over residues 97-109 (AKAKAKAKPARAK). One can recognise a Rubredoxin-like 2 domain in the interval 121–172 (FRKWICITCGHIYDEALGDETEGFAPGTLFEDIPDDWCCPDCGATKEDYVLH). Fe cation-binding residues include cysteine 126, cysteine 129, cysteine 159, and cysteine 162.

This sequence belongs to the rubredoxin family. Requires Fe(3+) as cofactor.

The protein resides in the cytoplasm. Its pathway is hydrocarbon metabolism; alkane degradation. Functionally, involved in the hydrocarbon hydroxylating system, which transfers electrons from NADH to rubredoxin reductase and then through rubredoxin to alkane 1 monooxygenase. The polypeptide is Rubredoxin-2 (alkG) (Alcanivorax borkumensis (strain ATCC 700651 / DSM 11573 / NCIMB 13689 / SK2)).